Reading from the N-terminus, the 76-residue chain is Protein RALF-like 30 (76 aa).

Positions 1–22 (MKAWVICLMVISIFMMIEPTLA) are cleaved as a signal peptide. 2 cysteine pairs are disulfide-bonded: Cys37-Cys46 and Cys66-Cys72.

The protein belongs to the plant rapid alkalinization factor (RALF) family.

Its subcellular location is the secreted. Cell signaling peptide that may regulate plant stress, growth, and development. Mediates a rapid alkalinization of extracellular space by mediating a transient increase in the cytoplasmic Ca(2+) concentration leading to a calcium-dependent signaling events through a cell surface receptor and a concomitant activation of some intracellular mitogen-activated protein kinases. This Arabidopsis thaliana (Mouse-ear cress) protein is Protein RALF-like 30 (RALFL30).